Here is a 425-residue protein sequence, read N- to C-terminus: MEQLRLEPISRVNGSVTLPGSKSLSNRILLLAALANGTTVVENLLDSDDIRHMLGALQLLGVNVSLNQERTVATVQGVGGVFKTPREPLFLGNAGTAYRPLTAVLAAVAGEYELIGEPRMEERPIGHLVDALQALGGDITYSKNKDYPPLKIIGGQINGGEVAIDGSISSQFLTALLMAAPLFNGDTKITIKGTLVSKPYIDITLDVMARFGIEVEHSNYATFTVKGGQQYQSLERIMVEGDASSASYFVAAAAIAGGEIEIKGVGAKSVQGDIGFAKVMEQVGAKIDWYDERLVVRKGQLNGVDIDANAIPDAAMTLATVALFAKGPTAIRNIYNWRVKETDRLHAMATELRKVGAEVVEGHDFIEITPPKHFNDVAIDTYDDHRIAMCFAMVAVGGKPITINDPKCTYKTFPTFFNVLASVSE.

The 3-phosphoshikimate site is built by Lys22, Ser23, and Arg27. Lys22 contacts phosphoenolpyruvate. Positions 95 and 123 each coordinate phosphoenolpyruvate. Residues Ser169, Ser170, Gln171, Ser197, Asp313, Asn336, and Lys340 each contribute to the 3-phosphoshikimate site. Gln171 lines the phosphoenolpyruvate pocket. The Proton acceptor role is filled by Asp313. Phosphoenolpyruvate is bound by residues Arg344, Arg386, and Lys411.

Belongs to the EPSP synthase family. As to quaternary structure, monomer.

It localises to the cytoplasm. The catalysed reaction is 3-phosphoshikimate + phosphoenolpyruvate = 5-O-(1-carboxyvinyl)-3-phosphoshikimate + phosphate. It participates in metabolic intermediate biosynthesis; chorismate biosynthesis; chorismate from D-erythrose 4-phosphate and phosphoenolpyruvate: step 6/7. Catalyzes the transfer of the enolpyruvyl moiety of phosphoenolpyruvate (PEP) to the 5-hydroxyl of shikimate-3-phosphate (S3P) to produce enolpyruvyl shikimate-3-phosphate and inorganic phosphate. This is 3-phosphoshikimate 1-carboxyvinyltransferase from Pseudoalteromonas translucida (strain TAC 125).